Reading from the N-terminus, the 292-residue chain is Phosphoenolpyruvate guanylyltransferase (292 aa).

Phosphoenolpyruvate-binding residues include threonine 168, glycine 184, and serine 187. Residues 243-292 (PLVAEDSGGSGGESGTSAESGLSVPPGIVGGTQRRIVSDASGPGRAKKYP) form a disordered region.

This sequence belongs to the CofC family.

The enzyme catalyses phosphoenolpyruvate + GTP + H(+) = enolpyruvoyl-2-diphospho-5'-guanosine + diphosphate. It functions in the pathway cofactor biosynthesis; coenzyme F420 biosynthesis. In terms of biological role, guanylyltransferase that catalyzes the activation of phosphoenolpyruvate (PEP) as enolpyruvoyl-2-diphospho-5'-guanosine, via the condensation of PEP with GTP. It is involved in the biosynthesis of coenzyme F420, a hydride carrier cofactor. The polypeptide is Phosphoenolpyruvate guanylyltransferase (Frankia casuarinae (strain DSM 45818 / CECT 9043 / HFP020203 / CcI3)).